Consider the following 323-residue polypeptide: Glucokinase (323 aa).

Residue 8–13 participates in ATP binding; that stretch reads GDVGGT.

The protein belongs to the bacterial glucokinase family.

The protein localises to the cytoplasm. The enzyme catalyses D-glucose + ATP = D-glucose 6-phosphate + ADP + H(+). This is Glucokinase from Yersinia pseudotuberculosis serotype I (strain IP32953).